We begin with the raw amino-acid sequence, 150 residues long: MAVSPEAAAIIQRKKAQYCRFADSNQWDRFDSIMLPSATFLFHNPDGSVITKGDIEYSWSSTKDWVAFFENEFKTMQTIHILGPAEMGQIAPDEIKAIWAVTYHAGTKEHQGGVHGTGGGHYHETWKKVGDDWFMESLRMERLYWKLLSV.

It functions in the pathway secondary metabolite biosynthesis. Its function is as follows. Probable cyclase; part of the gene cluster that mediates the biosynthesis of the tetraketides fugralins such as linear fugralin A and cyclic fugralin B, volatile compounds that play a role in the asexual reproductive cycle but are not involved in pathogenicity. Fugralin B is similar to fugralin A except for a cyclization between the carboxylic acid C-8 and the alcohol on C-4 resulting in a six membered lactone ring, probably catalyzed by the cyclase FGR4. One of the key features of fugralins is the presence of a double methyl group, which is only rarely encountered in fungal secondary metabolites. As the fugralins cluster does not contain an independent methyltransferase, the PKS FGR1 is probably responsible for adding two methyl groups to the same carbon atom. The exact role of the individual cluster genes remains unknown and further work is needed to unravel the biosynthetic pathway. The sequence is that of Probable cyclase FGR4 from Gibberella zeae (strain ATCC MYA-4620 / CBS 123657 / FGSC 9075 / NRRL 31084 / PH-1) (Wheat head blight fungus).